Consider the following 56-residue polypeptide: Lipase, thermostable (56 aa).

It belongs to the AB hydrolase superfamily. Pseudomonas lipase family.

The catalysed reaction is a triacylglycerol + H2O = a diacylglycerol + a fatty acid + H(+). Its function is as follows. This thermostable and solvent-tolerant lipase is rather nonspecific. It can synthesize both primary and secondary alcohol esters. Simple triglycerides of short and middle chain fatty acids (C&lt;13) are the preferred substrates. This Burkholderia cepacia (Pseudomonas cepacia) protein is Lipase, thermostable.